The primary structure comprises 565 residues: Sulfite reductase [NADPH] hemoprotein beta-component (565 aa).

[4Fe-4S] cluster contacts are provided by C429, C435, C474, and C478. C478 contacts siroheme.

The protein belongs to the nitrite and sulfite reductase 4Fe-4S domain family. In terms of assembly, alpha(8)-beta(8). The alpha component is a flavoprotein, the beta component is a hemoprotein. Siroheme serves as cofactor. Requires [4Fe-4S] cluster as cofactor.

It carries out the reaction hydrogen sulfide + 3 NADP(+) + 3 H2O = sulfite + 3 NADPH + 4 H(+). The protein operates within sulfur metabolism; hydrogen sulfide biosynthesis; hydrogen sulfide from sulfite (NADPH route): step 1/1. Component of the sulfite reductase complex that catalyzes the 6-electron reduction of sulfite to sulfide. This is one of several activities required for the biosynthesis of L-cysteine from sulfate. The chain is Sulfite reductase [NADPH] hemoprotein beta-component from Shewanella piezotolerans (strain WP3 / JCM 13877).